We begin with the raw amino-acid sequence, 165 residues long: Large ribosomal subunit protein uL11 (165 aa).

Belongs to the universal ribosomal protein uL11 family. Part of the ribosomal stalk of the 50S ribosomal subunit. Interacts with L10 and the large rRNA to form the base of the stalk. L10 forms an elongated spine to which L12 dimers bind in a sequential fashion forming a multimeric L10(L12)X complex.

Functionally, forms part of the ribosomal stalk which helps the ribosome interact with GTP-bound translation factors. In Thermococcus kodakarensis (strain ATCC BAA-918 / JCM 12380 / KOD1) (Pyrococcus kodakaraensis (strain KOD1)), this protein is Large ribosomal subunit protein uL11.